Here is a 917-residue protein sequence, read N- to C-terminus: MFRKARRVNVRKRNDSEEEERERDEEQEPPPLLPPPGTGEEAGPGGGDRAPGGESLLGPGPSPPSALTPGLGAEAGGGFPGGAEPGNGLKPRKRPRENKEVPRASLLSFQDEEEENEEVFKVKKSSYSKKIVKLLKKEYKEDLEKSKIKTELNSSAESEQPLDKTGHVKDTNQEDGVIISEHGEDEMDMESEKEEEKPKTGGAFSNALSSLNVLRPGEIPDAAFIHAARKKRQMARELGDFTPHDNEPGKGRLVREDENDASDDEDDDEKRRIVFSVKEKSQRQKIAEEIGIEGSDDDALVTGEQDEELSRWEQEQIRKGINIPQVQASQPAEVNMYYQNTYQTMPYGSSYGIPYSYTAYGSSDAKSQKTDNTVPFKTPSNEMTPVTIDLVKKQLKDRLDSMKELHKTNRQQHEKHLQSRVDSTRAIERLEGSSGGIGERYKFLQEMRGYVQDLLECFSEKVPLINELESAIHQLYKQRASRLVQRRQDDIKDESSEFSSHSNKALMAPNLDSFGRDRALYQEHAKRRIAEREARRTRRRQAREQTGKMADHLEGLSSDDEETSTDITNFNLEKDRISKESGKVFEDVLESFYSIDCIKSQFEAWRSKYYTSYKDAYIGLCLPKLFNPLIRLQLLTWTPLEAKCRDFENMLWFESLLFYGCEEREQEKDDVDVALLPTIVEKVILPKLTVIAENMWDPFSTTQTSRMVGITLKLINGYPSVVNAENKNTQVYLKALLLRMRRTLDDDVFMPLYPKNVLENKNSGPYLFFQRQFWSSVKLLGNFLQWYGIFSNKTLQELSIDGLLNRYILMAFQNSEYGDDSIKKAQNVINCFPKQWFMNLKGERTISQLENFCRYLVHLADTIYRNSIGCSDVEKRNARENIKQIVKLLASVRALDHAMSVASDHNVKEFKSLIEGK.

Residues 1–11 (MFRKARRVNVR) are compositionally biased toward basic residues. 3 disordered regions span residues 1-123 (MFRK…FKVK), 143-205 (LEKS…GAFS), and 229-275 (RKKR…RIVF). Ser16 bears the Phosphoserine mark. Over residues 16 to 28 (SEEEERERDEEQE) the composition is skewed to acidic residues. Gly residues-rich tracts occupy residues 40–50 (EEAGPGGGDRA) and 73–85 (AEAG…GAEP). Lys149 is covalently cross-linked (Glycyl lysine isopeptide (Lys-Gly) (interchain with G-Cter in SUMO1); alternate). Residue Lys149 forms a Glycyl lysine isopeptide (Lys-Gly) (interchain with G-Cter in SUMO2); alternate linkage. Ser154, Ser155, and Ser158 each carry phosphoserine. The segment covering 161 to 172 (PLDKTGHVKDTN) has biased composition (basic and acidic residues). Acidic residues predominate over residues 183 to 193 (GEDEMDMESEK). Phosphoserine is present on Ser191. Basic and acidic residues predominate over residues 234–256 (MARELGDFTPHDNEPGKGRLVRE). A compositionally biased stretch (acidic residues) spans 257-268 (DENDASDDEDDD). Phosphoserine occurs at positions 262 and 295. Disordered regions lie at residues 362–381 (SSDA…TPSN) and 530–564 (AERE…EETS). Residues 378 to 558 (TPSNEMTPVT…MADHLEGLSS (181 aa)) form a necessary and sufficient for interaction with PAX7 region. Positions 542–554 (AREQTGKMADHLE) are enriched in basic and acidic residues. A phosphoserine mark is found at Ser557 and Ser558. The residue at position 563 (Thr563) is a Phosphothreonine.

Belongs to the GCF family. In terms of assembly, interacts with PAX3 and PAX7. Interacts with WDR5; associates with a histone methyltransferase (HMT) complex composed at least of RBBP5, ASH2L, SET1, SET2 and KMT2A/MLL1, KMT2D/MLL2, KMT2C/MLL3 and KMT2B/MLL4 through direct interaction with WDR5. Ubiquitous.

The protein localises to the nucleus. In terms of biological role, adapter protein linking the transcription factors PAX3 and PAX7 to the histone methylation machinery and involved in myogenesis. Associates with a histone methyltransferase complex that specifically mediates dimethylation and trimethylation of 'Lys-4' of histone H3. Mediates the recruitment of that complex to the transcription factors PAX3 and PAX7 on chromatin to regulate the expression of genes involved in muscle progenitor cells proliferation including ID3 and CDC20. The polypeptide is PAX3- and PAX7-binding protein 1 (PAXBP1) (Homo sapiens (Human)).